The primary structure comprises 249 residues: DNA polymerase sliding clamp (249 aa).

It belongs to the PCNA family. As to quaternary structure, homotrimer. The subunits circularize to form a toroid; DNA passes through its center. Replication factor C (RFC) is required to load the toroid on the DNA.

In terms of biological role, sliding clamp subunit that acts as a moving platform for DNA processing. Responsible for tethering the catalytic subunit of DNA polymerase and other proteins to DNA during high-speed replication. This is DNA polymerase sliding clamp from Pyrococcus horikoshii (strain ATCC 700860 / DSM 12428 / JCM 9974 / NBRC 100139 / OT-3).